Here is a 126-residue protein sequence, read N- to C-terminus: Fluoride-specific ion channel FluC (126 aa).

2 helical membrane passes run 2 to 22 (IKSL…RWLL) and 36 to 56 (GTLV…AYFL). Na(+) contacts are provided by Gly75 and Ser78. 2 helical membrane passes run 80–100 (FSTF…IWAL) and 105–125 (VHVI…TILF).

It belongs to the fluoride channel Fluc/FEX (TC 1.A.43) family. In terms of assembly, homodimer.

It is found in the cell inner membrane. The catalysed reaction is fluoride(in) = fluoride(out). With respect to regulation, na(+) is not transported, but it plays an essential structural role and its presence is essential for fluoride channel function. Fluoride-specific ion channel. Important for reducing fluoride concentration in the cell, thus reducing its toxicity. Is highly specific for fluoride ions and cannot transport chloride ions. The protein is Fluoride-specific ion channel FluC of Escherichia coli O1:K1 / APEC.